A 235-amino-acid polypeptide reads, in one-letter code: MAQADPADRDRLIVALDVPSVDAANAMIEKLGDSVGFYKIGYQLAYAGGLPLVEKLARAGKKVFVDLKLHDIGNTVARGVESLNSLGATFLTVHAYPQTMKAAVAARGDSGLKILAVTVLTSYDDSDLADAGYRFGVRDLVEARARQALAIGVDGLVCSPEEAANLRGIVGPDMALVTPGIRPAGAAAGDQKRIMTPARAIAAGASHLVVGRPVMEAADPKQAAEAIVAEIAQAT.

Substrate is bound by residues Asp17, Lys39, 66 to 75, Thr121, Arg182, Gln191, Gly211, and Arg212; that span reads DLKLHDIGNT. Lys68 serves as the catalytic Proton donor.

Belongs to the OMP decarboxylase family. Type 1 subfamily. Homodimer.

The enzyme catalyses orotidine 5'-phosphate + H(+) = UMP + CO2. It functions in the pathway pyrimidine metabolism; UMP biosynthesis via de novo pathway; UMP from orotate: step 2/2. Catalyzes the decarboxylation of orotidine 5'-monophosphate (OMP) to uridine 5'-monophosphate (UMP). This chain is Orotidine 5'-phosphate decarboxylase, found in Rhodopseudomonas palustris (strain BisB5).